A 210-amino-acid chain; its full sequence is Imidazoleglycerol-phosphate dehydratase (210 aa).

It belongs to the imidazoleglycerol-phosphate dehydratase family.

The protein resides in the cytoplasm. It catalyses the reaction D-erythro-1-(imidazol-4-yl)glycerol 3-phosphate = 3-(imidazol-4-yl)-2-oxopropyl phosphate + H2O. It functions in the pathway amino-acid biosynthesis; L-histidine biosynthesis; L-histidine from 5-phospho-alpha-D-ribose 1-diphosphate: step 6/9. The chain is Imidazoleglycerol-phosphate dehydratase from Mycobacterium leprae (strain Br4923).